Here is a 567-residue protein sequence, read N- to C-terminus: Proline--tRNA ligase (567 aa).

This sequence belongs to the class-II aminoacyl-tRNA synthetase family. ProS type 1 subfamily. As to quaternary structure, homodimer.

Its subcellular location is the cytoplasm. It carries out the reaction tRNA(Pro) + L-proline + ATP = L-prolyl-tRNA(Pro) + AMP + diphosphate. Functionally, catalyzes the attachment of proline to tRNA(Pro) in a two-step reaction: proline is first activated by ATP to form Pro-AMP and then transferred to the acceptor end of tRNA(Pro). As ProRS can inadvertently accommodate and process non-cognate amino acids such as alanine and cysteine, to avoid such errors it has two additional distinct editing activities against alanine. One activity is designated as 'pretransfer' editing and involves the tRNA(Pro)-independent hydrolysis of activated Ala-AMP. The other activity is designated 'posttransfer' editing and involves deacylation of mischarged Ala-tRNA(Pro). The misacylated Cys-tRNA(Pro) is not edited by ProRS. The protein is Proline--tRNA ligase of Campylobacter curvus (strain 525.92).